We begin with the raw amino-acid sequence, 259 residues long: Ribosomal RNA small subunit methyltransferase A (259 aa).

S-adenosyl-L-methionine-binding residues include N13, L15, G40, E61, D85, and N103.

This sequence belongs to the class I-like SAM-binding methyltransferase superfamily. rRNA adenine N(6)-methyltransferase family. RsmA subfamily.

The protein resides in the cytoplasm. It catalyses the reaction adenosine(1518)/adenosine(1519) in 16S rRNA + 4 S-adenosyl-L-methionine = N(6)-dimethyladenosine(1518)/N(6)-dimethyladenosine(1519) in 16S rRNA + 4 S-adenosyl-L-homocysteine + 4 H(+). Specifically dimethylates two adjacent adenosines (A1518 and A1519) in the loop of a conserved hairpin near the 3'-end of 16S rRNA in the 30S particle. May play a critical role in biogenesis of 30S subunits. The polypeptide is Ribosomal RNA small subunit methyltransferase A (Neisseria meningitidis serogroup A / serotype 4A (strain DSM 15465 / Z2491)).